The primary structure comprises 153 residues: UPF0756 membrane protein LSL_0936 (153 aa).

The next 5 helical transmembrane spans lie at 4 to 24 (WIFL…SLLI), 26 to 46 (GAVV…YPVI), 51 to 71 (INWG…TGQI), 86 to 106 (WIAV…VNLL), and 116 to 136 (LVIG…GPVI).

It belongs to the UPF0756 family.

The protein resides in the cell membrane. This chain is UPF0756 membrane protein LSL_0936, found in Ligilactobacillus salivarius (strain UCC118) (Lactobacillus salivarius).